The sequence spans 223 residues: Endonuclease V (223 aa).

Mg(2+)-binding residues include D35 and D103.

Belongs to the endonuclease V family. The cofactor is Mg(2+).

It localises to the cytoplasm. It carries out the reaction Endonucleolytic cleavage at apurinic or apyrimidinic sites to products with a 5'-phosphate.. DNA repair enzyme involved in the repair of deaminated bases. Selectively cleaves double-stranded DNA at the second phosphodiester bond 3' to a deoxyinosine leaving behind the intact lesion on the nicked DNA. The chain is Endonuclease V from Escherichia coli O45:K1 (strain S88 / ExPEC).